Reading from the N-terminus, the 611-residue chain is Chaperone protein DnaK (611 aa).

At Thr172 the chain carries Phosphothreonine; by autocatalysis. Residues 575-611 (AAQAAQAQQDGGNESADKQDDNVVDADYEEVNDDDKK) form a disordered region. Positions 596–611 (NVVDADYEEVNDDDKK) are enriched in acidic residues.

Belongs to the heat shock protein 70 family.

In terms of biological role, acts as a chaperone. This Shouchella clausii (strain KSM-K16) (Alkalihalobacillus clausii) protein is Chaperone protein DnaK.